We begin with the raw amino-acid sequence, 159 residues long: Afifavidin (159 aa).

Positions 1 to 23 are cleaved as a signal peptide; the sequence is MRRLASLAVALPLLAVVASPALA. Residues 36–151 enclose the Avidin-like domain; that stretch reads GVPAVSSSWV…GSDTFTLVNK (116 aa). Residues Asn-46, Ser-50, Tyr-66, Asn-68, and Gly-74 each coordinate biotin. Cys-75 and Cys-104 are joined by a disulfide. Biotin is bound by residues Ser-106, Thr-108, and Asp-144.

The protein belongs to the avidin/streptavidin family. In terms of assembly, exhibits a dynamic oligomeric assembly: the apo form self-assembles mostly into toroid-shaped homooctamers, with a small fraction of homodimers, yet upon biotin binding the intact afifavidin consists solely of the dimer.

Its subcellular location is the secreted. Functionally, the exact role played by afifavidin is still obscure. Forms a strong non-covalent complex with biotin and 2-iminobiotin. The sequence is that of Afifavidin from Afifella pfennigii (Rhodobium pfennigii).